A 1486-amino-acid polypeptide reads, in one-letter code: Rap guanine nucleotide exchange factor 2 (1486 aa).

Disordered stretches follow at residues 40–59 (HVSSSHSGCSITSDSGSSSL) and 68–101 (SEAGDMDLSGLPETAVDSEDDDDEEDIERASDPL). Acidic residues predominate over residues 83–94 (VDSEDDDDEEDI). 135-252 (AFANMTMSVR…QKVEEEGEIV (118 aa)) contacts a nucleoside 3',5'-cyclic phosphate. In terms of domain architecture, N-terminal Ras-GEF spans 267-380 (KGHIVIKGTS…RLLNIACAAK (114 aa)). One can recognise a PDZ domain in the interval 385-468 (LMTLTKPARE…LSITVKTNLF (84 aa)). The residue at position 501 (serine 501) is a Phosphoserine. In terms of domain architecture, Ras-associating spans 606 to 692 (PDQVLRVFKA…GRYYLKNNME (87 aa)). Threonine 644 carries the post-translational modification Phosphothreonine. The region spanning 717–944 (STVEVATQLS…SQGSTNATVL (228 aa)) is the Ras-GEF domain. A phosphoserine mark is found at serine 806, serine 930, serine 933, and serine 1022. Positions 1002 to 1049 (PATNTLPKNPTDKKPVKSETSPVAPRAGLQPKAQPQPQPPQPPHKLNQ) are disordered. Positions 1035–1044 (QPQPQPPQPP) are enriched in pro residues. Phosphoserine is present on residues serine 1077, serine 1086, serine 1092, serine 1113, serine 1117, serine 1156, and serine 1173. Disordered regions lie at residues 1090 to 1176 (EGSL…SVSI), 1221 to 1254 (PSTEELSQDQGDRASLDAADSGRGSWTSCSSGSH), 1303 to 1357 (KYSR…DSSS), and 1391 to 1486 (GRYR…VSAV). Low complexity-rich tracts occupy residues 1105-1122 (SNTSSQLSSPPTSPQSSP) and 1138-1159 (SDSGHSEISSRSSIVSNSSFDS). Composition is skewed to polar residues over residues 1244 to 1254 (GSWTSCSSGSH) and 1304 to 1328 (YSRQSQSRESLDQAQSRASWASSTG). A compositionally biased stretch (acidic residues) spans 1475 to 1486 (AEEDEDEQVSAV).

The protein belongs to the RAPGEF2 family. As to quaternary structure, found in a complex, at least composed of KIDINS220, MAGI2, NTRK1 and RAPGEF2; the complex is mainly formed at late endosomes in a neuronal growth factor (NGF)-dependent manner. Interacts (via C-terminal domain) with NEDD4 (via WW domains); this interaction leads to ubiquitination and degradation via the proteasome pathway in a cAMP-independent manner. Interacts with MAGI1 (via PDZ domain). Interacts with ADRB1 (via C-terminal PDZ motif); the interaction is direct. Interacts (via Ras-associating domain) with RAP1A (via GTP-bound active form). Interacts weakly with HRAS (via GDP- and GTP-bound forms). Interacts (via C-terminal domain) with MAGI2 (via PDZ and WW domains). Interacts with CDH1 and TJP1. Interacts with CTNNB1. Ubiquitinated by NEDD4, leading to proteasomal degradation. Post-translationally, phosphorylation by PLK2 promotes its activity.

It is found in the cytoplasm. Its subcellular location is the perinuclear region. The protein resides in the cell membrane. It localises to the late endosome. The protein localises to the cell junction. Functions as a guanine nucleotide exchange factor (GEF), which activates Rap and Ras family of small GTPases by exchanging bound GDP for free GTP in a cAMP-dependent manner. Serves as a link between cell surface receptors and Rap/Ras GTPases in intracellular signaling cascades. Also acts as an effector for Rap1 by direct association with Rap1-GTP thereby leading to the amplification of Rap1-mediated signaling. Shows weak activity on HRAS. It is controversial whether RAPGEF2 binds cAMP and cGMP or not. Its binding to ligand-activated beta-1 adrenergic receptor ADRB1 leads to the Ras activation through the G(s)-alpha signaling pathway. Involved in the cAMP-induced Ras and Erk1/2 signaling pathway that leads to sustained inhibition of long term melanogenesis by reducing dendrite extension and melanin synthesis. Also provides inhibitory signals for cell proliferation of melanoma cells and promotes their apoptosis in a cAMP-independent nanner. Regulates cAMP-induced neuritogenesis by mediating the Rap1/B-Raf/ERK signaling through a pathway that is independent on both PKA and RAPGEF3/RAPGEF4. Involved in neuron migration and in the formation of the major forebrain fiber connections forming the corpus callosum, the anterior commissure and the hippocampal commissure during brain development. Involved in neuronal growth factor (NGF)-induced sustained activation of Rap1 at late endosomes and in brain-derived neurotrophic factor (BDNF)-induced axon outgrowth of hippocampal neurons. Plays a role in the regulation of embryonic blood vessel formation and in the establishment of basal junction integrity and endothelial barrier function. May be involved in the regulation of the vascular endothelial growth factor receptor KDR and cadherin CDH5 expression at allantois endothelial cell-cell junctions. Binds to cAMP. The protein is Rap guanine nucleotide exchange factor 2 (RAPGEF2) of Bos taurus (Bovine).